A 211-amino-acid polypeptide reads, in one-letter code: FMN-dependent NADH:quinone oxidoreductase 2 (211 aa).

17–19 (SYS) is an FMN binding site.

It belongs to the azoreductase type 1 family. Homodimer. It depends on FMN as a cofactor.

The catalysed reaction is 2 a quinone + NADH + H(+) = 2 a 1,4-benzosemiquinone + NAD(+). It catalyses the reaction N,N-dimethyl-1,4-phenylenediamine + anthranilate + 2 NAD(+) = 2-(4-dimethylaminophenyl)diazenylbenzoate + 2 NADH + 2 H(+). Its function is as follows. Quinone reductase that provides resistance to thiol-specific stress caused by electrophilic quinones. Also exhibits azoreductase activity. Catalyzes the reductive cleavage of the azo bond in aromatic azo compounds to the corresponding amines. The sequence is that of FMN-dependent NADH:quinone oxidoreductase 2 from Bacillus licheniformis (strain ATCC 14580 / DSM 13 / JCM 2505 / CCUG 7422 / NBRC 12200 / NCIMB 9375 / NCTC 10341 / NRRL NRS-1264 / Gibson 46).